A 155-amino-acid chain; its full sequence is V-type proton ATPase 16 kDa proteolipid subunit c (155 aa).

Topologically, residues 1–10 (MSEAKSGPEY) are lumenal. A helical membrane pass occupies residues 11–33 (ASFFAVMGASAAMVFSALGAAYG). Over 34–55 (TAKSGTGIAAMSVMRPEMIMKS) the chain is Cytoplasmic. Residues 56–76 (IIPVVMAGIIAIYGLVVAVLI) traverse the membrane as a helical segment. Residues 77–92 (ANSLNDGISLYRSFLQ) lie on the Lumenal side of the membrane. Residues 93 to 114 (LGAGLSVGLSGLAAGFAIGIVG) form a helical membrane-spanning segment. At 115–131 (DAGVRGTAQQPRLFVGM) the chain is on the cytoplasmic side. The chain crosses the membrane as a helical span at residues 132-152 (ILILIFAEVLGLYGLIVALIL). Over 153–155 (STK) the chain is Lumenal.

The protein belongs to the V-ATPase proteolipid subunit family. As to quaternary structure, V-ATPase is a heteromultimeric enzyme made up of two complexes: the ATP-hydrolytic V1 complex and the proton translocation V0 complex. The V1 complex consists of three catalytic AB heterodimers that form a heterohexamer, three peripheral stalks each consisting of EG heterodimers, one central rotor including subunits D and F, and the regulatory subunits C and H. The proton translocation complex V0 consists of the proton transport subunit a, a ring of proteolipid subunits c9c'', rotary subunit d, subunits e and f, and the accessory subunits ATP6AP1/Ac45 and ATP6AP2/PRR. Interacts with the V0 complex V-ATPase subunit a4 ATP6V0A4. Interacts with LASS2. Interacts with RNF182; this interaction leads to ubiquitination and degradation via the proteasome pathway. In terms of processing, ubiquitinated by RNF182, leading to its degradation via the ubiquitin-proteasome pathway.

The protein localises to the cytoplasmic vesicle. Its subcellular location is the clathrin-coated vesicle membrane. The protein resides in the secretory vesicle. It is found in the synaptic vesicle membrane. Functionally, proton-conducting pore forming subunit of the V0 complex of vacuolar(H+)-ATPase (V-ATPase), a multisubunit enzyme composed of a peripheral complex (V1) that hydrolyzes ATP and a membrane integral complex (V0) that translocates protons. V-ATPase is responsible for acidifying and maintaining the pH of intracellular compartments and in some cell types, is targeted to the plasma membrane, where it is responsible for acidifying the extracellular environment. This is V-type proton ATPase 16 kDa proteolipid subunit c (ATP6V0C) from Ovis aries (Sheep).